The primary structure comprises 126 residues: Glycine cleavage system H protein (126 aa).

Residues 21 to 103 (TVTIGISEHA…YDGGWIVKVK (83 aa)) form the Lipoyl-binding domain. An N6-lipoyllysine modification is found at lysine 62.

It belongs to the GcvH family. The glycine cleavage system is composed of four proteins: P, T, L and H. (R)-lipoate is required as a cofactor.

Its function is as follows. The glycine cleavage system catalyzes the degradation of glycine. The H protein shuttles the methylamine group of glycine from the P protein to the T protein. The polypeptide is Glycine cleavage system H protein (Vibrio cholerae serotype O1 (strain ATCC 39541 / Classical Ogawa 395 / O395)).